We begin with the raw amino-acid sequence, 142 residues long: uncharacterized protein (142 aa).

This is an uncharacterized protein from Acanthamoeba polyphaga (Amoeba).